Consider the following 504-residue polypeptide: L-carnitine/gamma-butyrobetaine antiporter (504 aa).

12 helical membrane passes run 10-30 (IEPK…WLTV), 51-71 (WGWA…WLVF), 92-112 (IFMM…SIEI), 143-163 (GPLP…FFFV), 195-215 (FYLV…TPLV), 231-251 (LDAI…ACGL), 263-283 (SYLS…SFIM), 316-336 (WTVF…IFLA), 347-367 (LCFG…TVLG), 398-418 (WAAL…CFIA), 446-466 (LLVR…LLAL), and 475-495 (AIIA…LSFI).

Belongs to the BCCT transporter (TC 2.A.15) family. CaiT subfamily. As to quaternary structure, homotrimer.

The protein localises to the cell inner membrane. The catalysed reaction is 4-(trimethylamino)butanoate(in) + (R)-carnitine(out) = 4-(trimethylamino)butanoate(out) + (R)-carnitine(in). Its pathway is amine and polyamine metabolism; carnitine metabolism. Functionally, catalyzes the exchange of L-carnitine for gamma-butyrobetaine. This Escherichia coli O157:H7 protein is L-carnitine/gamma-butyrobetaine antiporter.